The sequence spans 288 residues: MAAGKEIRGKIKSVENTRKITKAMEMVAASKMRKAQERMRAARPYSDKIRNIAAHLSQANPEYTHPFMESNDAKTTGFIVVTTDKGLCGGLNTNVLRLLTTKLKDMQAAGEDAQAVAIGNKGLGFLNRIGVKVAAHATQLGDKPHLDKLIGPVKVLLDAYSEGKIKAVYLCYTRFINTMKQESVVEQLLPLTADRMQPDKTEHSWDYIYEPDAQTVIDELLVRYVEALVFQAVAENMASEQSARMVAMKSATDNAGSVIGELKLIYNKTRQAAITKELSEIVAGAAAV.

This sequence belongs to the ATPase gamma chain family. F-type ATPases have 2 components, CF(1) - the catalytic core - and CF(0) - the membrane proton channel. CF(1) has five subunits: alpha(3), beta(3), gamma(1), delta(1), epsilon(1). CF(0) has three main subunits: a, b and c.

It localises to the cell inner membrane. In terms of biological role, produces ATP from ADP in the presence of a proton gradient across the membrane. The gamma chain is believed to be important in regulating ATPase activity and the flow of protons through the CF(0) complex. This is ATP synthase gamma chain from Polaromonas naphthalenivorans (strain CJ2).